Reading from the N-terminus, the 474-residue chain is ATP synthase subunit beta, chloroplastic (474 aa).

155–162 serves as a coordination point for ATP; the sequence is GGAGVGKT.

This sequence belongs to the ATPase alpha/beta chains family. As to quaternary structure, F-type ATPases have 2 components, CF(1) - the catalytic core - and CF(0) - the membrane proton channel. CF(1) has five subunits: alpha(3), beta(3), gamma(1), delta(1), epsilon(1). CF(0) has four main subunits: a(1), b(1), b'(1) and c(9-12).

The protein resides in the plastid. It localises to the chloroplast thylakoid membrane. It catalyses the reaction ATP + H2O + 4 H(+)(in) = ADP + phosphate + 5 H(+)(out). Produces ATP from ADP in the presence of a proton gradient across the membrane. The catalytic sites are hosted primarily by the beta subunits. This is ATP synthase subunit beta, chloroplastic from Thalassiosira pseudonana (Marine diatom).